The following is a 421-amino-acid chain: Elongation factor 1-alpha (421 aa).

The tr-type G domain maps to 4–220 (NRHQNLAVIG…NGLPVPQPPT (217 aa)). A G1 region spans residues 13–20 (GHVDHGKS). 13–20 (GHVDHGKS) lines the GTP pocket. Ser-20 is a binding site for Mg(2+). The interval 69-73 (GVTID) is G2. Residues 90–93 (DCPG) form a G3 region. Residues 90-94 (DCPGH) and 145-148 (NKMD) contribute to the GTP site. Positions 145–148 (NKMD) are G4. The G5 stretch occupies residues 184–186 (SAF).

It belongs to the TRAFAC class translation factor GTPase superfamily. Classic translation factor GTPase family. EF-Tu/EF-1A subfamily.

It is found in the cytoplasm. It catalyses the reaction GTP + H2O = GDP + phosphate + H(+). Its function is as follows. GTP hydrolase that promotes the GTP-dependent binding of aminoacyl-tRNA to the A-site of ribosomes during protein biosynthesis. The protein is Elongation factor 1-alpha of Halobacterium salinarum (strain ATCC 700922 / JCM 11081 / NRC-1) (Halobacterium halobium).